A 185-amino-acid polypeptide reads, in one-letter code: Der GTPase-activating protein YihI (185 aa).

Disordered stretches follow at residues 1–74 and 145–169; these read MGRS…KKKI and EPEDDEEEIFEEAPVASKKKASSDE. Over residues 23–33 the composition is skewed to basic and acidic residues; that stretch reads NRSESDVEGRE. A compositionally biased stretch (basic residues) spans 34–47; the sequence is RKRVKKRKGLKSGS. A compositionally biased stretch (basic and acidic residues) spans 48–68; the sequence is RHSDGSEAKQRKAALARDPRL. Positions 145-155 are enriched in acidic residues; sequence EPEDDEEEIFE.

This sequence belongs to the YihI family. As to quaternary structure, interacts with Der.

In terms of biological role, a GTPase-activating protein (GAP) that modifies Der/EngA GTPase function. May play a role in ribosome biogenesis. This chain is Der GTPase-activating protein YihI, found in Vibrio atlanticus (strain LGP32) (Vibrio splendidus (strain Mel32)).